A 279-amino-acid chain; its full sequence is Acetyl-coenzyme A carboxylase carboxyl transferase subunit beta (279 aa).

The region spanning 27 to 279 is the CoA carboxyltransferase N-terminal domain; it reads LFLACPYCGT…IVKLHHRTEI (253 aa). Residues cysteine 31, cysteine 34, cysteine 49, and cysteine 52 each contribute to the Zn(2+) site. A C4-type zinc finger spans residues 31–52; the sequence is CPYCGTQMYNKQLGDYRVCAKC.

The protein belongs to the AccD/PCCB family. As to quaternary structure, acetyl-CoA carboxylase is a heterohexamer composed of biotin carboxyl carrier protein (AccB), biotin carboxylase (AccC) and two subunits each of ACCase subunit alpha (AccA) and ACCase subunit beta (AccD). It depends on Zn(2+) as a cofactor.

Its subcellular location is the cytoplasm. It catalyses the reaction N(6)-carboxybiotinyl-L-lysyl-[protein] + acetyl-CoA = N(6)-biotinyl-L-lysyl-[protein] + malonyl-CoA. It participates in lipid metabolism; malonyl-CoA biosynthesis; malonyl-CoA from acetyl-CoA: step 1/1. Its function is as follows. Component of the acetyl coenzyme A carboxylase (ACC) complex. Biotin carboxylase (BC) catalyzes the carboxylation of biotin on its carrier protein (BCCP) and then the CO(2) group is transferred by the transcarboxylase to acetyl-CoA to form malonyl-CoA. This is Acetyl-coenzyme A carboxylase carboxyl transferase subunit beta from Leuconostoc citreum (strain KM20).